The primary structure comprises 226 residues: PKHD-type hydroxylase mma_3620 (226 aa).

The Fe2OG dioxygenase domain maps to 78 to 178; the sequence is RYMPPLFNRY…RVCSFFWLQS (101 aa). Positions 96, 98, and 159 each coordinate Fe cation. Arg-169 lines the 2-oxoglutarate pocket.

Fe(2+) serves as cofactor. Requires L-ascorbate as cofactor.

The protein is PKHD-type hydroxylase mma_3620 of Janthinobacterium sp. (strain Marseille) (Minibacterium massiliensis).